Reading from the N-terminus, the 229-residue chain is 23 kDa piroplasm membrane protein (229 aa).

A signal peptide spans 1 to 19 (MNKYFKVFFFVLLTHALKS). Topologically, residues 20–203 (SLIFGQATLQ…EKEETSKKKY (184 aa)) are extracellular. A helical membrane pass occupies residues 204-224 (VLMVVVVVVFVVVASLVVFLV). The Cytoplasmic portion of the chain corresponds to 225-229 (KFCLK).

It is found in the membrane. The polypeptide is 23 kDa piroplasm membrane protein (Theileria annulata).